The sequence spans 329 residues: Probable ABC transporter permease protein MG188 homolog (329 aa).

6 helical membrane-spanning segments follow: residues F30 to L50, I96 to V116, V128 to L148, A176 to I196, L234 to F254, and N283 to L303. An ABC transmembrane type-1 domain is found at L88 to L303.

This sequence belongs to the binding-protein-dependent transport system permease family. MalFG subfamily.

It is found in the cell membrane. Probably part of a binding-protein-dependent transport system. Probably responsible for the translocation of the substrate across the membrane. The protein is Probable ABC transporter permease protein MG188 homolog of Mycoplasma pneumoniae (strain ATCC 29342 / M129 / Subtype 1) (Mycoplasmoides pneumoniae).